We begin with the raw amino-acid sequence, 740 residues long: NAD(P)H-quinone oxidoreductase subunit 5, chloroplastic (740 aa).

The next 16 helical transmembrane spans lie at 9-29 (WIIP…LFLF), 40-60 (WAFQ…YLSI), 89-109 (IDPL…MVLI), 125-145 (FAYM…SNLI), 147-167 (IYIF…FWFT), 185-205 (GDFG…SFEF), 219-239 (NEVD…GAVA), 258-278 (TPIS…FLVA), 286-306 (VIPY…LLGA), 327-347 (LGYM…FHLI), 354-374 (ALLF…VGYS), 396-416 (ITFL…CFWS), 425-445 (WLYS…TAFY), 543-563 (LFPI…GIPF), 602-622 (VLSV…YKPI), and 717-737 (SYLF…YLLF).

This sequence belongs to the complex I subunit 5 family. NDH is composed of at least 16 different subunits, 5 of which are encoded in the nucleus.

It localises to the plastid. The protein localises to the chloroplast thylakoid membrane. It catalyses the reaction a plastoquinone + NADH + (n+1) H(+)(in) = a plastoquinol + NAD(+) + n H(+)(out). The enzyme catalyses a plastoquinone + NADPH + (n+1) H(+)(in) = a plastoquinol + NADP(+) + n H(+)(out). NDH shuttles electrons from NAD(P)H:plastoquinone, via FMN and iron-sulfur (Fe-S) centers, to quinones in the photosynthetic chain and possibly in a chloroplast respiratory chain. The immediate electron acceptor for the enzyme in this species is believed to be plastoquinone. Couples the redox reaction to proton translocation, and thus conserves the redox energy in a proton gradient. In Nicotiana tabacum (Common tobacco), this protein is NAD(P)H-quinone oxidoreductase subunit 5, chloroplastic (ndhF).